A 357-amino-acid chain; its full sequence is UDP-N-acetylglucosamine--N-acetylmuramyl-(pentapeptide) pyrophosphoryl-undecaprenol N-acetylglucosamine transferase (357 aa).

UDP-N-acetyl-alpha-D-glucosamine contacts are provided by residues 12-14, Arg-166, Ser-196, and Gln-291; that span reads TAG.

The protein belongs to the glycosyltransferase 28 family. MurG subfamily.

It is found in the cell membrane. It carries out the reaction di-trans,octa-cis-undecaprenyl diphospho-N-acetyl-alpha-D-muramoyl-L-alanyl-D-glutamyl-meso-2,6-diaminopimeloyl-D-alanyl-D-alanine + UDP-N-acetyl-alpha-D-glucosamine = di-trans,octa-cis-undecaprenyl diphospho-[N-acetyl-alpha-D-glucosaminyl-(1-&gt;4)]-N-acetyl-alpha-D-muramoyl-L-alanyl-D-glutamyl-meso-2,6-diaminopimeloyl-D-alanyl-D-alanine + UDP + H(+). It functions in the pathway cell wall biogenesis; peptidoglycan biosynthesis. Functionally, cell wall formation. Catalyzes the transfer of a GlcNAc subunit on undecaprenyl-pyrophosphoryl-MurNAc-pentapeptide (lipid intermediate I) to form undecaprenyl-pyrophosphoryl-MurNAc-(pentapeptide)GlcNAc (lipid intermediate II). The chain is UDP-N-acetylglucosamine--N-acetylmuramyl-(pentapeptide) pyrophosphoryl-undecaprenol N-acetylglucosamine transferase from Geobacillus kaustophilus (strain HTA426).